The sequence spans 134 residues: Putative pre-16S rRNA nuclease (134 aa).

It belongs to the YqgF nuclease family.

The protein localises to the cytoplasm. Could be a nuclease involved in processing of the 5'-end of pre-16S rRNA. In Helicobacter pylori (strain HPAG1), this protein is Putative pre-16S rRNA nuclease.